A 685-amino-acid polypeptide reads, in one-letter code: Protein hook (685 aa).

Positions 6 to 122 (MEIYESLIRW…RLLQLILGCA (117 aa)) constitute a Calponin-homology (CH) domain. Positions 134-570 (QIMELEESLQ…LLAADSRYKK (437 aa)) form a coiled coil. 3 disordered regions span residues 430 to 449 (AAED…SSDV), 593 to 625 (LEKP…SGRV), and 661 to 685 (PGQS…FAKK). Residues 602 to 623 (ASSSSATGSGGDASTLTSTGSG) are compositionally biased toward low complexity. The segment covering 661–670 (PGQSFLSRQR) has biased composition (polar residues).

It belongs to the hook family. In terms of assembly, homodimer. Interacts with microtubules via its N-terminus.

Its subcellular location is the cytoplasm. The protein localises to the cytoskeleton. It is found in the endosome. Its function is as follows. Involved in endocytic trafficking. Probably acts as a cytoskeletal linker protein that tethers endosome vesicles to the cytoskeleton. This chain is Protein hook, found in Aedes aegypti (Yellowfever mosquito).